Here is a 356-residue protein sequence, read N- to C-terminus: UDP-N-acetylglucosamine--N-acetylmuramyl-(pentapeptide) pyrophosphoryl-undecaprenol N-acetylglucosamine transferase (356 aa).

UDP-N-acetyl-alpha-D-glucosamine contacts are provided by residues 11–13, asparagine 123, arginine 159, serine 187, isoleucine 241, 260–265, and glutamine 286; these read TGG and ALTVAE.

It belongs to the glycosyltransferase 28 family. MurG subfamily.

The protein resides in the cell inner membrane. It catalyses the reaction di-trans,octa-cis-undecaprenyl diphospho-N-acetyl-alpha-D-muramoyl-L-alanyl-D-glutamyl-meso-2,6-diaminopimeloyl-D-alanyl-D-alanine + UDP-N-acetyl-alpha-D-glucosamine = di-trans,octa-cis-undecaprenyl diphospho-[N-acetyl-alpha-D-glucosaminyl-(1-&gt;4)]-N-acetyl-alpha-D-muramoyl-L-alanyl-D-glutamyl-meso-2,6-diaminopimeloyl-D-alanyl-D-alanine + UDP + H(+). It participates in cell wall biogenesis; peptidoglycan biosynthesis. Its function is as follows. Cell wall formation. Catalyzes the transfer of a GlcNAc subunit on undecaprenyl-pyrophosphoryl-MurNAc-pentapeptide (lipid intermediate I) to form undecaprenyl-pyrophosphoryl-MurNAc-(pentapeptide)GlcNAc (lipid intermediate II). This chain is UDP-N-acetylglucosamine--N-acetylmuramyl-(pentapeptide) pyrophosphoryl-undecaprenol N-acetylglucosamine transferase, found in Azoarcus sp. (strain BH72).